The primary structure comprises 90 residues: Probable Fe(2+)-trafficking protein (90 aa).

It belongs to the Fe(2+)-trafficking protein family.

Functionally, could be a mediator in iron transactions between iron acquisition and iron-requiring processes, such as synthesis and/or repair of Fe-S clusters in biosynthetic enzymes. The chain is Probable Fe(2+)-trafficking protein from Polaromonas sp. (strain JS666 / ATCC BAA-500).